A 318-amino-acid polypeptide reads, in one-letter code: MTSVIFLGTPEFAVPILEGLIAQHYDILAVMTQPDRKVGRKLRLAASPVKQAAQKHDIPVLQPEKLSGSPELAQAIAMAPDLIVTAAYGQFLPTKFLEAAKIIAVNVHGSLLPKYRGGAPIQYSIMNGDSETGVTIIEMVKKMDAGDMFAQAKLPLTRADDTGTVFAKLSLLGRDLLLETLPKIIAGTATRTPQDPDKVTFSPTITKEQEHLNIHLPAKALDQWIRALRPDVGGYVYLNGQRTKLWAITPLSAGSTLPAGSIVERDKHRLVMVAGQQTTFQVDELQPAGKAKQSIADFLNGPGQQLVSGQQVITDDPE.

110 to 113 serves as a coordination point for (6S)-5,6,7,8-tetrahydrofolate; sequence SLLP.

The protein belongs to the Fmt family.

It carries out the reaction L-methionyl-tRNA(fMet) + (6R)-10-formyltetrahydrofolate = N-formyl-L-methionyl-tRNA(fMet) + (6S)-5,6,7,8-tetrahydrofolate + H(+). Its function is as follows. Attaches a formyl group to the free amino group of methionyl-tRNA(fMet). The formyl group appears to play a dual role in the initiator identity of N-formylmethionyl-tRNA by promoting its recognition by IF2 and preventing the misappropriation of this tRNA by the elongation apparatus. The protein is Methionyl-tRNA formyltransferase of Lacticaseibacillus paracasei (strain ATCC 334 / BCRC 17002 / CCUG 31169 / CIP 107868 / KCTC 3260 / NRRL B-441) (Lactobacillus paracasei).